Consider the following 165-residue polypeptide: Large ribosomal subunit protein uL10 (165 aa).

Belongs to the universal ribosomal protein uL10 family. As to quaternary structure, part of the ribosomal stalk of the 50S ribosomal subunit. The N-terminus interacts with L11 and the large rRNA to form the base of the stalk. The C-terminus forms an elongated spine to which L12 dimers bind in a sequential fashion forming a multimeric L10(L12)X complex.

In terms of biological role, forms part of the ribosomal stalk, playing a central role in the interaction of the ribosome with GTP-bound translation factors. This Burkholderia ambifaria (strain MC40-6) protein is Large ribosomal subunit protein uL10.